Here is a 387-residue protein sequence, read N- to C-terminus: Phosphoglycerate kinase (387 aa).

Residues 21–23 (DLN), R36, 59–62 (HLGR), R113, and R146 each bind substrate. Residues K197, E314, and 340 to 343 (GGDT) each bind ATP.

This sequence belongs to the phosphoglycerate kinase family. Monomer.

The protein resides in the cytoplasm. The enzyme catalyses (2R)-3-phosphoglycerate + ATP = (2R)-3-phospho-glyceroyl phosphate + ADP. Its pathway is carbohydrate degradation; glycolysis; pyruvate from D-glyceraldehyde 3-phosphate: step 2/5. The protein is Phosphoglycerate kinase of Pseudomonas fluorescens (strain ATCC BAA-477 / NRRL B-23932 / Pf-5).